We begin with the raw amino-acid sequence, 199 residues long: Octanoyltransferase (199 aa).

Positions 27–199 (SNSCDELWLL…FVQYFLTQFK (173 aa)) constitute a BPL/LPL catalytic domain. Substrate is bound by residues 66–73 (RGGQVTYH), 133–135 (SIG), and 146–148 (GIA). The active-site Acyl-thioester intermediate is the C164.

It belongs to the LipB family.

It localises to the cytoplasm. It catalyses the reaction octanoyl-[ACP] + L-lysyl-[protein] = N(6)-octanoyl-L-lysyl-[protein] + holo-[ACP] + H(+). Its pathway is protein modification; protein lipoylation via endogenous pathway; protein N(6)-(lipoyl)lysine from octanoyl-[acyl-carrier-protein]: step 1/2. Catalyzes the transfer of endogenously produced octanoic acid from octanoyl-acyl-carrier-protein onto the lipoyl domains of lipoate-dependent enzymes. Lipoyl-ACP can also act as a substrate although octanoyl-ACP is likely to be the physiological substrate. This Legionella pneumophila (strain Paris) protein is Octanoyltransferase.